We begin with the raw amino-acid sequence, 1046 residues long: Protein HBT1 (1046 aa).

Disordered stretches follow at residues 1–455 (MNMN…AAEK), 469–894 (DYQQ…LGGA), and 908–1046 (PSLI…RSEI). Ser41 carries the post-translational modification Phosphoserine. The segment covering 81-96 (KDSETPHEDTEADANR) has biased composition (basic and acidic residues). Composition is skewed to polar residues over residues 98–149 (ANVT…SPPT), 175–191 (IATT…TSPV), and 228–301 (ANTG…NTDS). Position 303 is a phosphoserine (Ser303). Residues 327 to 341 (VYTSTGPKSNVSSGM) are compositionally biased toward polar residues. The residue at position 363 (Ser363) is a Phosphoserine. Polar residues-rich tracts occupy residues 389 to 408 (QTGL…QQTM) and 420 to 429 (GFVSQQPSYH). The segment covering 430-455 (DSNKNIQHPEKNKVDNKNISERAAEK) has biased composition (basic and acidic residues). Over residues 488–498 (YSSSAGKNKNL) the composition is skewed to polar residues. Position 491 is a phosphoserine (Ser491). Residues 529 to 538 (GHMKYNDNGR) are compositionally biased toward basic and acidic residues. Polar residues predominate over residues 548-559 (QAGSQNTNNNID). At Ser561 the chain carries Phosphoserine. Positions 570 to 582 (GLSNDATTRNNVV) are enriched in polar residues. A compositionally biased stretch (basic and acidic residues) spans 586–597 (MKDEDMNEDSTK). Residues 605 to 619 (YLDDVEDYHENDIDD) show a composition bias toward acidic residues. The segment covering 621–630 (SNAKKNDLYS) has biased composition (basic and acidic residues). Phosphoserine is present on Ser671. A compositionally biased stretch (polar residues) spans 742–756 (FTNNPETGTTGNVDT). Over residues 773–782 (DDSKNTDTHL) the composition is skewed to basic and acidic residues. Polar residues-rich tracts occupy residues 792 to 802 (NSRSGDTTYSK) and 837 to 855 (SSEQ…NQEY). Tyr855 carries the post-translational modification Phosphotyrosine. At Ser857 the chain carries Phosphoserine. Residues 868 to 890 (KVLEEDAPGYKREVDLKNKRRTD) show a composition bias toward basic and acidic residues. A compositionally biased stretch (polar residues) spans 922 to 951 (DTNTSSSQKPSEGTYPETTSYSIHNETTSQ). Positions 952 to 963 (GRKVSVGSMGSG) are enriched in low complexity. Residues 964–976 (KSKHHHNHHRHSR) show a composition bias toward basic residues. A Phosphoserine modification is found at Ser1005. Residues 1006 to 1019 (DEGEQDYHDDEQGE) show a composition bias toward acidic residues. A Phosphoserine modification is found at Ser1034.

As to quaternary structure, conjugated with HUB1. HUB1 has not the classical C-terminal Gly residue, so it is still unknown how conjugation may occur.

The protein resides in the cytoplasm. Functionally, polarity-determining protein which forms a conjugate with the ubiquitin-like modifier HUB1. Involved in bud site selection and cellular morphogenesis during conjugation. Required for survival during stationary phase. The polypeptide is Protein HBT1 (HBT1) (Saccharomyces cerevisiae (strain ATCC 204508 / S288c) (Baker's yeast)).